The following is a 340-amino-acid chain: UDP-glucose 4-epimerase (340 aa).

Residues 16–17, 37–42, 60–61, 82–86, Ser127, Tyr154, Lys158, and Phe182 each bind NAD(+); these read YI, IDNNKN, DL, and FAAKT. The substrate site is built by Ser127 and Tyr154. Tyr154 (proton acceptor) is an active-site residue. Residues Asn183, 199-200, 216-218, Arg231, and 295-298 contribute to the substrate site; these read TL, FLY, and RSWD.

It belongs to the NAD(P)-dependent epimerase/dehydratase family. In terms of assembly, homodimer. It depends on NAD(+) as a cofactor.

It catalyses the reaction UDP-alpha-D-glucose = UDP-alpha-D-galactose. Its pathway is carbohydrate metabolism; galactose metabolism. Involved in the metabolism of galactose. Catalyzes the conversion of UDP-galactose (UDP-Gal) to UDP-glucose (UDP-Glc) through a mechanism involving the transient reduction of NAD. This chain is UDP-glucose 4-epimerase (galE), found in Mycoplasma genitalium (strain ATCC 33530 / DSM 19775 / NCTC 10195 / G37) (Mycoplasmoides genitalium).